The following is a 152-amino-acid chain: Arginine repressor (152 aa).

Belongs to the ArgR family.

It is found in the cytoplasm. It functions in the pathway amino-acid biosynthesis; L-arginine biosynthesis [regulation]. Its function is as follows. Regulates arginine biosynthesis genes. In Lactococcus lactis subsp. lactis (strain IL1403) (Streptococcus lactis), this protein is Arginine repressor.